The sequence spans 392 residues: Methylthioribose-1-phosphate isomerase (392 aa).

Asp267 functions as the Proton donor in the catalytic mechanism.

This sequence belongs to the eIF-2B alpha/beta/delta subunits family. MtnA subfamily.

It is found in the cytoplasm. The protein resides in the nucleus. The enzyme catalyses 5-(methylsulfanyl)-alpha-D-ribose 1-phosphate = 5-(methylsulfanyl)-D-ribulose 1-phosphate. The protein operates within amino-acid biosynthesis; L-methionine biosynthesis via salvage pathway; L-methionine from S-methyl-5-thio-alpha-D-ribose 1-phosphate: step 1/6. Functionally, catalyzes the interconversion of methylthioribose-1-phosphate (MTR-1-P) into methylthioribulose-1-phosphate (MTRu-1-P). This is Methylthioribose-1-phosphate isomerase from Blastomyces gilchristii (strain SLH14081) (Blastomyces dermatitidis).